The sequence spans 67 residues: Large ribosomal subunit protein uL29 (67 aa).

This sequence belongs to the universal ribosomal protein uL29 family.

In Acetivibrio thermocellus (strain ATCC 27405 / DSM 1237 / JCM 9322 / NBRC 103400 / NCIMB 10682 / NRRL B-4536 / VPI 7372) (Clostridium thermocellum), this protein is Large ribosomal subunit protein uL29.